The chain runs to 663 residues: Leishmanolysin-like peptidase (663 aa).

H246 is a binding site for Zn(2+). The active site involves E247. Zn(2+)-binding residues include H250 and H353.

Belongs to the peptidase M8 family. Zn(2+) is required as a cofactor.

It is found in the cytoplasm. Metalloprotease. The sequence is that of Leishmanolysin-like peptidase from Caenorhabditis briggsae.